A 129-amino-acid chain; its full sequence is Small ribosomal subunit protein uS11 (129 aa).

The protein belongs to the universal ribosomal protein uS11 family. As to quaternary structure, part of the 30S ribosomal subunit. Interacts with proteins S7 and S18. Binds to IF-3.

Located on the platform of the 30S subunit, it bridges several disparate RNA helices of the 16S rRNA. Forms part of the Shine-Dalgarno cleft in the 70S ribosome. This chain is Small ribosomal subunit protein uS11, found in Haemophilus influenzae (strain 86-028NP).